The sequence spans 321 residues: Lipoyl synthase (321 aa).

Cys-68, Cys-73, Cys-79, Cys-94, Cys-98, Cys-101, and Ser-308 together coordinate [4Fe-4S] cluster. Residues 80–297 (FNHGTATFMI…KAEALAMGFT (218 aa)) enclose the Radical SAM core domain.

It belongs to the radical SAM superfamily. Lipoyl synthase family. Requires [4Fe-4S] cluster as cofactor.

Its subcellular location is the cytoplasm. The catalysed reaction is [[Fe-S] cluster scaffold protein carrying a second [4Fe-4S](2+) cluster] + N(6)-octanoyl-L-lysyl-[protein] + 2 oxidized [2Fe-2S]-[ferredoxin] + 2 S-adenosyl-L-methionine + 4 H(+) = [[Fe-S] cluster scaffold protein] + N(6)-[(R)-dihydrolipoyl]-L-lysyl-[protein] + 4 Fe(3+) + 2 hydrogen sulfide + 2 5'-deoxyadenosine + 2 L-methionine + 2 reduced [2Fe-2S]-[ferredoxin]. The protein operates within protein modification; protein lipoylation via endogenous pathway; protein N(6)-(lipoyl)lysine from octanoyl-[acyl-carrier-protein]: step 2/2. Functionally, catalyzes the radical-mediated insertion of two sulfur atoms into the C-6 and C-8 positions of the octanoyl moiety bound to the lipoyl domains of lipoate-dependent enzymes, thereby converting the octanoylated domains into lipoylated derivatives. This chain is Lipoyl synthase, found in Salmonella arizonae (strain ATCC BAA-731 / CDC346-86 / RSK2980).